A 538-amino-acid chain; its full sequence is Capsular polysaccharide biosynthesis protein RkpI (538 aa).

The next 6 helical transmembrane spans lie at 16-36, 70-90, 114-134, 139-159, 170-190, and 212-232; these read LHDY…AVIF, VIAL…YAAA, LVFS…IFYA, IVFW…YMYF, LFWV…LFYG, and NTVR…WLGV.

Its subcellular location is the cell membrane. The protein operates within capsule biogenesis; capsule polysaccharide biosynthesis. Functionally, involved in antigen K (capsular polysaccharide) biosynthesis. The sequence is that of Capsular polysaccharide biosynthesis protein RkpI (rkpI) from Rhizobium meliloti (strain 1021) (Ensifer meliloti).